The following is a 496-amino-acid chain: Probable cytosol aminopeptidase (496 aa).

Mn(2+) is bound by residues Lys258 and Asp263. Lys270 is an active-site residue. The Mn(2+) site is built by Asp281, Asp340, and Glu342. Arg344 is an active-site residue.

This sequence belongs to the peptidase M17 family. It depends on Mn(2+) as a cofactor.

It is found in the cytoplasm. It catalyses the reaction Release of an N-terminal amino acid, Xaa-|-Yaa-, in which Xaa is preferably Leu, but may be other amino acids including Pro although not Arg or Lys, and Yaa may be Pro. Amino acid amides and methyl esters are also readily hydrolyzed, but rates on arylamides are exceedingly low.. The enzyme catalyses Release of an N-terminal amino acid, preferentially leucine, but not glutamic or aspartic acids.. Its function is as follows. Presumably involved in the processing and regular turnover of intracellular proteins. Catalyzes the removal of unsubstituted N-terminal amino acids from various peptides. The sequence is that of Probable cytosol aminopeptidase from Helicobacter pylori (strain HPAG1).